We begin with the raw amino-acid sequence, 571 residues long: MMLSNISQTKAELLSGLGSSLTSSPGNVSAATMKLEAVMENLQRQHQQRMMEQHKNDDVISNDVRCDDFSDGGERQRSYSGSPKEDSDEDRNDMTSPMMRDDDDVMQSDGRSPEPDKTSLITQQMAFAAALAQRSSPDGSLSSLVPQAMMQHFGQFPASFDASQLPQGFRELAMLQHQHVAQRMAMEAQKRMQQDHNIQQSTNHIPTPSSASSHTSSGSVTSQTNSCNGSQQEWTYEEQFKQLYEIDDDIKRKEFLDDLFSFMQKRGTPVNRIPIMAKQVLDLYQLYRLVVEKGGLVEVINKKIWREITKGLNLPSSITSAAFTLRTQYMKYLYPFECEREKLSVPSELQAAIEGNRREGRRPSYSSHMFSYSPNTSANMLTPPKFPFAHHNGLAQLSQMAAAKYGQPDERCLPTSPTQQLIAQQQQLLQSANAQHVAAMAALETIQNQAKARQAAQQAAHHAAQQAAQHQMSLKKEIDSDYSEGEPPEKKLSFDDSVRRLTPDNQRRSSTSSLKISMGDRGRHNEMSDVTNADSINICVEVNGITYQGVLFAHSPNHPPVKHVTLDHPTS.

Disordered stretches follow at residues 45 to 117 (QHQQ…EPDK) and 190 to 229 (KRMQ…SCNG). Residues 49-77 (RMMEQHKNDDVISNDVRCDDFSDGGERQR) show a composition bias toward basic and acidic residues. The segment covering 195 to 206 (DHNIQQSTNHIP) has biased composition (polar residues). Residues 207–224 (TPSSASSHTSSGSVTSQT) show a composition bias toward low complexity. One can recognise an ARID domain in the interval 249–341 (DIKRKEFLDD…YLYPFECERE (93 aa)). The span at 459–471 (AAHHAAQQAAQHQ) shows a compositional bias: low complexity. The segment at 459-528 (AAHHAAQQAA…GDRGRHNEMS (70 aa)) is disordered. Residues 473–558 (SLKKEIDSDY…GVLFAHSPNH (86 aa)) form the REKLES domain. Composition is skewed to basic and acidic residues over residues 487 to 507 (PPEK…DNQR) and 518 to 527 (MGDRGRHNEM).

The protein localises to the nucleus. Its function is as follows. Transcription factor. The chain is Protein dead ringer homolog (Ci-DRIL1/2) from Ciona intestinalis (Transparent sea squirt).